The chain runs to 443 residues: Phosphoglucosamine mutase (443 aa).

Ser-100 functions as the Phosphoserine intermediate in the catalytic mechanism. Ser-100, Asp-239, Asp-241, and Asp-243 together coordinate Mg(2+). Ser-100 carries the post-translational modification Phosphoserine.

This sequence belongs to the phosphohexose mutase family. It depends on Mg(2+) as a cofactor. Activated by phosphorylation.

It carries out the reaction alpha-D-glucosamine 1-phosphate = D-glucosamine 6-phosphate. In terms of biological role, catalyzes the conversion of glucosamine-6-phosphate to glucosamine-1-phosphate. The sequence is that of Phosphoglucosamine mutase from Shewanella sediminis (strain HAW-EB3).